Here is a 1842-residue protein sequence, read N- to C-terminus: Fatty acid synthase subunit alpha (1842 aa).

The segment at 101–141 is disordered; it reads PAEAPASTSSTPKVETAAAAAPAATPAPAPAQTSAPAAALP. Residues 116–139 are compositionally biased toward low complexity; sequence TAAAAAPAATPAPAPAQTSAPAAA. In terms of domain architecture, Carrier spans 145–220; sequence PKALEVLHTL…AIMQSSFNGS (76 aa). At S180 the chain carries O-(pantetheine 4'-phosphoryl)serine. Position 604 is a phosphoserine (S604). Residues 1079–1616 enclose the Ketosynthase family 3 (KS3) domain; it reads LQEVVIDHDL…QVGGQVIVIH (538 aa). C1262 acts as the For beta-ketoacyl synthase activity in catalysis. Residues 1304 to 1332 form a disordered region; that stretch reads GATSNAAKETERGRTPQEMSRPATSTRDG. A Phosphoserine modification is found at S1412. Catalysis depends on for beta-ketoacyl synthase activity residues H1501 and H1542. The Mg(2+) site is built by D1728, V1729, and E1730. Residues 1728–1730, Y1754, S1764, 1773–1783, 1797–1800, and 1827–1829 contribute to the acetyl-CoA site; these read DVE, EAVFKSLGISG, SSES, and ISH. The Mg(2+) site is built by S1828 and H1829.

Belongs to the thiolase-like superfamily. Fungal fatty acid synthetase subunit alpha family. [Alpha(6)beta(6)] hexamers of two multifunctional subunits (alpha and beta).

The catalysed reaction is acetyl-CoA + n malonyl-CoA + 2n NADPH + 4n H(+) = a long-chain-acyl-CoA + n CoA + n CO2 + 2n NADP(+).. It carries out the reaction a fatty acyl-[ACP] + malonyl-[ACP] + H(+) = a 3-oxoacyl-[ACP] + holo-[ACP] + CO2. It catalyses the reaction a (3R)-hydroxyacyl-[ACP] + NADP(+) = a 3-oxoacyl-[ACP] + NADPH + H(+). Its function is as follows. Fatty acid synthetase catalyzes the formation of long-chain fatty acids from acetyl-CoA, malonyl-CoA and NADPH. The alpha subunit contains domains for: acyl carrier protein, 3-oxoacyl-[acyl-carrier-protein] reductase, and 3-oxoacyl-[acyl-carrier-protein] synthase. This subunit coordinates the binding of the six beta subunits to the enzyme complex. This is Fatty acid synthase subunit alpha (fas2) from Schizosaccharomyces pombe (strain 972 / ATCC 24843) (Fission yeast).